Here is a 345-residue protein sequence, read N- to C-terminus: MTSITTIPLSTLRSSLPARPDAAAAPQRWRVADIEALYALPFMDLLFRAQQVHRANFDANQVQLSTLLSIKTGGCAEDCGYCPQSSHFETEVKASKLMALDEVMAAAQAAKDQGATRFCMGAAWSRPKERDMERVTEMVREVRGLGLETCMTLGMLEAEQAQALKDAGLDYYNHNLDSSPEFYGSIISTRTYQDRLDTLENVRGAGINVCCGGIVGMGESRAQRAGLVAQLANLEPYPESVPINNLVAVEGTPLADTPPLDPFEFVRTIAVARITMPRTMVRLSAGREQMDEALQALCFMAGANSIFYGDRLLTTSNPQADKDRQLFARLGLKVQGERPAATVQG.

The 228-residue stretch at 60-287 (NQVQLSTLLS…RTMVRLSAGR (228 aa)) folds into the Radical SAM core domain. [4Fe-4S] cluster is bound by residues C75, C79, and C82. [2Fe-2S] cluster contacts are provided by C119, C150, C210, and R282.

Belongs to the radical SAM superfamily. Biotin synthase family. Homodimer. It depends on [4Fe-4S] cluster as a cofactor. Requires [2Fe-2S] cluster as cofactor.

It carries out the reaction (4R,5S)-dethiobiotin + (sulfur carrier)-SH + 2 reduced [2Fe-2S]-[ferredoxin] + 2 S-adenosyl-L-methionine = (sulfur carrier)-H + biotin + 2 5'-deoxyadenosine + 2 L-methionine + 2 oxidized [2Fe-2S]-[ferredoxin]. Its pathway is cofactor biosynthesis; biotin biosynthesis; biotin from 7,8-diaminononanoate: step 2/2. In terms of biological role, catalyzes the conversion of dethiobiotin (DTB) to biotin by the insertion of a sulfur atom into dethiobiotin via a radical-based mechanism. In Polaromonas naphthalenivorans (strain CJ2), this protein is Biotin synthase.